A 406-amino-acid polypeptide reads, in one-letter code: Vacuole membrane protein 1 (406 aa).

The span at 1–20 shows a compositional bias: basic and acidic residues; sequence MAENGKNCDQRRIAMSKDQH. Residues 1-37 are disordered; that stretch reads MAENGKNCDQRRIAMSKDQHNGSLTDPSSVHEKKRRD. Residue Ala-2 is modified to N-acetylalanine. Residues 2–77 are Cytoplasmic-facing; that stretch reads AENGKNCDQR…WTSKLWHRQS (76 aa). The helical transmembrane segment at 78–98 threads the bilayer; it reads IVVSFLLLLAALVATYYVEGA. Over 99-109 the chain is Extracellular; sequence HQQYVQRIEKQ. Residues 110 to 130 form a helical membrane-spanning segment; that stretch reads FLLYAYWIGLGILSSVGLGTG. Residues 131–250 lie on the Cytoplasmic side of the membrane; it reads LHTFLLYLGP…ASRAKLAVQK (120 aa). The interval 173–316 is VTT domain; it reads GAEGAISLWS…FVIVTFSKHI (144 aa). Residues 251–271 traverse the membrane as a helical segment; sequence LVQKVGFFGILACASIPNPLF. At 272–273 the chain is on the extracellular side; it reads DL. Residues 274 to 294 traverse the membrane as a helical segment; sequence AGITCGHFLVPFWTFFGATLI. Over 295–305 the chain is Cytoplasmic; it reads GKAIIKMHIQK. The chain crosses the membrane as a helical span at residues 306-326; it reads IFVIVTFSKHIVEQMVTFIGA. Residues 327–363 lie on the Extracellular side of the membrane; sequence VPGIGPSLQKPFQEYLEAQRQKLHHRSEAGTPQGENW. The chain crosses the membrane as a helical span at residues 364–384; that stretch reads LSWMFEKLVVAMVCYFVLSII. Topologically, residues 385–406 are cytoplasmic; it reads NSMAQNYAKRIQQRLNSEEKTK.

This sequence belongs to the VMP1 family. In terms of assembly, interacts with BECN1. Interacts with TJP1. Interacts with TP53INP2. Interacts with TMEM41B. Interacts with ATP2A2, PLN and SLN; competes with PLN and SLN to prevent them from forming an inhibitory complex with ATP2A2. Interacts with ATG2A.

The protein localises to the endoplasmic reticulum-Golgi intermediate compartment membrane. The protein resides in the cell membrane. It is found in the vacuole membrane. It localises to the endoplasmic reticulum membrane. The catalysed reaction is a 1,2-diacyl-sn-glycero-3-phospho-L-serine(in) = a 1,2-diacyl-sn-glycero-3-phospho-L-serine(out). It carries out the reaction cholesterol(in) = cholesterol(out). It catalyses the reaction a 1,2-diacyl-sn-glycero-3-phosphocholine(in) = a 1,2-diacyl-sn-glycero-3-phosphocholine(out). The enzyme catalyses a 1,2-diacyl-sn-glycero-3-phosphoethanolamine(in) = a 1,2-diacyl-sn-glycero-3-phosphoethanolamine(out). In terms of biological role, phospholipid scramblase involved in lipid homeostasis and membrane dynamics processes. Has phospholipid scramblase activity toward cholesterol and phosphatidylserine, as well as phosphatidylethanolamine and phosphatidylcholine. Required for autophagosome formation: participates in early stages of autophagosome biogenesis at the endoplasmic reticulum (ER) membrane by reequilibrating the leaflets of the ER as lipids are extracted by ATG2 (ATG2A or ATG2B) to mediate autophagosome assembly. Regulates ATP2A2 activity to control ER-isolation membrane contacts for autophagosome formation. In addition to autophagy, involved in other processes in which phospholipid scramblase activity is required. Modulates ER contacts with lipid droplets, mitochondria and endosomes. Plays an essential role in formation of cell junctions. Upon stress such as bacterial and viral infection, promotes formation of cytoplasmic vacuoles followed by cell death. Involved in the cytoplasmic vacuolization of acinar cells during the early stage of acute pancreatitis. In Mus musculus (Mouse), this protein is Vacuole membrane protein 1.